The primary structure comprises 147 residues: uncharacterized protein (147 aa).

One can recognise an HTH LytTR-type domain in the interval 44–147 (LVGYIDKEIH…LKSIKERLSI (104 aa)).

It is found in the cytoplasm. This is an uncharacterized protein from Staphylococcus aureus (strain bovine RF122 / ET3-1).